A 334-amino-acid polypeptide reads, in one-letter code: Large ribosomal subunit protein uL3 (334 aa).

The span at 1–10 (MGMKKNRPRR) shows a compositional bias: basic residues. A disordered region spans residues 1–21 (MGMKKNRPRRGSLAFSPRKRA).

Belongs to the universal ribosomal protein uL3 family. In terms of assembly, part of the 50S ribosomal subunit. Forms a cluster with proteins L14 and L24e.

In terms of biological role, one of the primary rRNA binding proteins, it binds directly near the 3'-end of the 23S rRNA, where it nucleates assembly of the 50S subunit. The protein is Large ribosomal subunit protein uL3 of Methanococcus maripaludis (strain DSM 14266 / JCM 13030 / NBRC 101832 / S2 / LL).